A 172-amino-acid chain; its full sequence is MLDAFAKVVAQADARGEFLSNTQIDALLAIVSEGNKRLDVVNKITNNASAIVTNAARALFAEQPQLISPGGNAYTSRRMAACLRDMEIVLRYVSYAMIAGDASVLDDRCLNGLRETYQALGTPGASVAVAIQKMKDAALALVNDTTGTPAGDCASLVAEIATYFDRAAAAVA.

(2R,3E)-phycoerythrobilin is bound by residues N35 and D39. Residues N72, C82, and R84–D85 each bind (2R,3E)-phycocyanobilin. N4-methylasparagine is present on N72. Residues P149–G151 and C153 each bind (2R,3E)-phycoerythrobilin.

Belongs to the phycobiliprotein family. As to quaternary structure, heterododecamer of 6 alpha and 6 beta chains. The basic functional unit of phycobiliproteins is a ring-shaped hexamer formed from two back-to-back trimers contacting via the alpha chain subunits. The trimers are composed of alpha/beta subunit heterodimers arranged around a three-fold axis of symmetry. The phycoerythrins also contain a gamma subunit which is located in the center of the hexamer. In terms of processing, contains one covalently linked phycocyanobilin chromophore and one covalently linked phycoerythrobilin chromophore.

The protein resides in the plastid. Its subcellular location is the chloroplast thylakoid membrane. In terms of biological role, light-harvesting photosynthetic tetrapyrrole chromophore-protein from the phycobiliprotein complex (phycobilisome, PBS). Phycocyanin is the major phycobiliprotein in the PBS rod. This chain is R-phycocyanin beta chain (rpcB), found in Polysiphonia urceolata (Red alga).